Here is a 357-residue protein sequence, read N- to C-terminus: Cinnamyl alcohol dehydrogenase 7 (357 aa).

A Zn(2+)-binding site is contributed by C46. T48 contributes to the NADP(+) binding site. Residues H68, E69, C99, C102, C105, C113, and C162 each coordinate Zn(2+). NADP(+)-binding positions include T166, G187 to G192, S210 to K215, T250, G274, and S297 to V299.

It belongs to the zinc-containing alcohol dehydrogenase family. As to quaternary structure, homodimer. Zn(2+) is required as a cofactor. As to expression, expressed in the differentiation and elongation zones of primary and lateral roots. Expressed in the hypocotyl, cotyledon and leaf veins, hydathodes and trichomes. In stems, expressed in the vascular cambium region. Expressed in the style, anthers, stamen filaments, vascular tissues of sepals and stigmatic regions in flowers, and abscission, style and stigmatic regions of siliques and seed testa.

The enzyme catalyses (E)-cinnamyl alcohol + NADP(+) = (E)-cinnamaldehyde + NADPH + H(+). Its pathway is aromatic compound metabolism; phenylpropanoid biosynthesis. Its function is as follows. Involved in lignin biosynthesis. Catalyzes the final step specific for the production of lignin monomers. Catalyzes the NADPH-dependent reduction of coniferaldehyde, 5-hydroxyconiferaldehyde, sinapaldehyde, 4-coumaraldehyde and caffeyl aldehyde to their respective alcohols. In Arabidopsis thaliana (Mouse-ear cress), this protein is Cinnamyl alcohol dehydrogenase 7 (CAD7).